Reading from the N-terminus, the 73-residue chain is Disintegrin trigramin-gamma (73 aa).

A Disintegrin domain is found at 1–73; the sequence is EAGEDCDCGS…AGCPRNPLHA (73 aa). 6 disulfide bridges follow: Cys6–Cys21, Cys8–Cys16, Cys15–Cys38, Cys29–Cys35, Cys34–Cys59, and Cys47–Cys66. The Cell attachment site motif lies at 51-53; sequence RGD.

This sequence belongs to the venom metalloproteinase (M12B) family. P-II subfamily. P-IIa sub-subfamily. As to quaternary structure, monomer (disintegrin). In terms of tissue distribution, expressed by the venom gland.

Its subcellular location is the secreted. Its function is as follows. Inhibits fibrinogen interaction with platelets. Acts by binding to alpha-IIb/beta-3 (ITGA2B/ITGB3) on the platelet surface and inhibits aggregation induced by ADP, thrombin, platelet-activating factor and collagen. In Craspedocephalus gramineus (Bamboo pit viper), this protein is Disintegrin trigramin-gamma.